Reading from the N-terminus, the 210-residue chain is Large ribosomal subunit protein uL3 (210 aa).

This sequence belongs to the universal ribosomal protein uL3 family. In terms of assembly, part of the 50S ribosomal subunit. Forms a cluster with proteins L14 and L19.

Functionally, one of the primary rRNA binding proteins, it binds directly near the 3'-end of the 23S rRNA, where it nucleates assembly of the 50S subunit. The polypeptide is Large ribosomal subunit protein uL3 (Natranaerobius thermophilus (strain ATCC BAA-1301 / DSM 18059 / JW/NM-WN-LF)).